The following is a 301-amino-acid chain: Probable alpha-L-glutamate ligase 2 (301 aa).

The 184-residue stretch at 104–287 (LQLLSRKSIG…VADKIIQFIE (184 aa)) folds into the ATP-grasp domain. ATP contacts are provided by residues Lys-141, 178 to 179 (EY), Asp-187, and 211 to 213 (RSN). Mg(2+) is bound by residues Asp-248, Glu-260, and Asn-262. Mn(2+)-binding residues include Asp-248, Glu-260, and Asn-262.

The protein belongs to the RimK family. Requires Mg(2+) as cofactor. Mn(2+) serves as cofactor.

In Shewanella denitrificans (strain OS217 / ATCC BAA-1090 / DSM 15013), this protein is Probable alpha-L-glutamate ligase 2.